The primary structure comprises 367 residues: Phosphoribosylaminoimidazole-succinocarboxamide synthase (367 aa).

It belongs to the SAICAR synthetase family.

The catalysed reaction is 5-amino-1-(5-phospho-D-ribosyl)imidazole-4-carboxylate + L-aspartate + ATP = (2S)-2-[5-amino-1-(5-phospho-beta-D-ribosyl)imidazole-4-carboxamido]succinate + ADP + phosphate + 2 H(+). The protein operates within purine metabolism; IMP biosynthesis via de novo pathway; 5-amino-1-(5-phospho-D-ribosyl)imidazole-4-carboxamide from 5-amino-1-(5-phospho-D-ribosyl)imidazole-4-carboxylate: step 1/2. The polypeptide is Phosphoribosylaminoimidazole-succinocarboxamide synthase (Shewanella halifaxensis (strain HAW-EB4)).